The chain runs to 436 residues: UPF0597 protein YhaM (436 aa).

It belongs to the UPF0597 family.

Its function is as follows. Thought to be a D-serine dehydratase, however it does not complement a dsdA (D-serine dehydratase) mutant in strain CFT073, suggesting it may not have that function. This is UPF0597 protein YhaM from Escherichia coli O157:H7.